The following is a 310-amino-acid chain: HPr kinase/phosphorylase (310 aa).

Residues H138 and K159 contribute to the active site. 153 to 160 (GDSGIGKS) lines the ATP pocket. S160 contacts Mg(2+). D177 serves as the catalytic Proton acceptor; for phosphorylation activity. Proton donor; for dephosphorylation activity. The tract at residues 201–210 (LEIRGVGIID) is important for the catalytic mechanism of both phosphorylation and dephosphorylation. Position 202 (E202) interacts with Mg(2+). R243 is a catalytic residue. The interval 264–269 (PVKTGR) is important for the catalytic mechanism of dephosphorylation.

Belongs to the HPrK/P family. As to quaternary structure, homohexamer. Mg(2+) serves as cofactor.

The catalysed reaction is [HPr protein]-L-serine + ATP = [HPr protein]-O-phospho-L-serine + ADP + H(+). The enzyme catalyses [HPr protein]-O-phospho-L-serine + phosphate + H(+) = [HPr protein]-L-serine + diphosphate. Its function is as follows. Catalyzes the ATP- as well as the pyrophosphate-dependent phosphorylation of a specific serine residue in HPr, a phosphocarrier protein of the phosphoenolpyruvate-dependent sugar phosphotransferase system (PTS). HprK/P also catalyzes the pyrophosphate-producing, inorganic phosphate-dependent dephosphorylation (phosphorolysis) of seryl-phosphorylated HPr (P-Ser-HPr). The two antagonistic activities of HprK/P are regulated by several intracellular metabolites, which change their concentration in response to the absence or presence of rapidly metabolisable carbon sources (glucose, fructose, etc.) in the growth medium. Therefore, by controlling the phosphorylation state of HPr, HPrK/P is a sensor enzyme that plays a major role in the regulation of carbon metabolism and sugar transport: it mediates carbon catabolite repression (CCR), and regulates PTS-catalyzed carbohydrate uptake and inducer exclusion. The polypeptide is HPr kinase/phosphorylase (Streptococcus uberis (strain ATCC BAA-854 / 0140J)).